The primary structure comprises 261 residues: Probable cyclic nucleotide phosphodiesterase PSM_A2567 (261 aa).

D22, H24, D62, N94, H160, H198, and H200 together coordinate Fe cation. AMP contacts are provided by residues H24, D62, and 94 to 95; that span reads NH. Position 200 (H200) interacts with AMP.

Belongs to the cyclic nucleotide phosphodiesterase class-III family. Requires Fe(2+) as cofactor.

This is Probable cyclic nucleotide phosphodiesterase PSM_A2567 from Pseudoalteromonas sp. (strain SM9913).